The primary structure comprises 448 residues: NK1 transcription factor-related protein 1 (448 aa).

Residues 1–13 (MSASGPEAPGDIP) are compositionally biased toward low complexity. Disordered stretches follow at residues 1-80 (MSAS…LRPT), 115-299 (ASAP…PRRA), and 350-397 (KWKK…GAPL). The segment covering 14 to 30 (ALPPPPQPGSGPAPPAP) has biased composition (pro residues). Composition is skewed to low complexity over residues 62 to 79 (PAAP…PLRP) and 115 to 129 (ASAP…SGRP). Basic and acidic residues predominate over residues 130 to 139 (PRAEELERRA). A compositionally biased stretch (acidic residues) spans 186 to 203 (SGDEVPDDEDDDEDEAPE). Positions 205-214 (EAARGAEEAR) are enriched in basic and acidic residues. Composition is skewed to gly residues over residues 215–227 (GGGG…GSGC) and 259–270 (PPGGAAAPGGAG). Low complexity predominate over residues 271–280 (TTPQGTATAA). A DNA-binding region (homeobox) is located at residues 296–355 (PRRARTAFTYEQLVALENKFKATRYLSVCERLNLALSLSLTETQVKIWFQNRRTKWKKQN). The segment covering 364–382 (TGGGGGPGPGAGPGTGLPG) has biased composition (gly residues).

It belongs to the NK-1 homeobox family. In terms of tissue distribution, expressed in hemopoietic progenitor cells.

The protein resides in the nucleus. In terms of biological role, may be required for the coordinated crosstalk of factors involved in the maintenance of energy homeostasis, possibly by regulating the transcription of specific factors involved in energy balance. The protein is NK1 transcription factor-related protein 1 of Homo sapiens (Human).